Reading from the N-terminus, the 352-residue chain is Ion-translocating oxidoreductase complex subunit D (352 aa).

The next 4 helical transmembrane spans lie at 20–40 (IMLL…WFFG), 42–62 (GTLF…AIVL), 69–91 (VASH…SIPP), and 123–143 (PAMI…TSWL). FMN phosphoryl threonine is present on Thr-187. 5 consecutive transmembrane segments (helical) span residues 215 to 235 (LAGV…VFLL), 242 to 262 (WHIP…GWLF), 267 to 287 (LASP…FFIL), 301 to 321 (LIFG…GGYP), and 322 to 342 (DGVA…DYYT).

The protein belongs to the NqrB/RnfD family. In terms of assembly, the complex is composed of six subunits: RsxA, RsxB, RsxC, RsxD, RsxE and RsxG. It depends on FMN as a cofactor.

It localises to the cell inner membrane. Its function is as follows. Part of a membrane-bound complex that couples electron transfer with translocation of ions across the membrane. Required to maintain the reduced state of SoxR. This chain is Ion-translocating oxidoreductase complex subunit D, found in Salmonella paratyphi A (strain ATCC 9150 / SARB42).